A 376-amino-acid chain; its full sequence is Actin-related protein T1 (376 aa).

This sequence belongs to the actin family.

The protein localises to the cytoplasm. It is found in the cytoskeleton. Its subcellular location is the nucleus. It localises to the cytoplasmic vesicle. The protein resides in the secretory vesicle. The protein localises to the acrosome. Functionally, negatively regulates the Hedgehog (SHH) signaling. Binds to the promoter of the SHH signaling mediator, GLI1, and inhibits its expression. This chain is Actin-related protein T1 (Actrt1), found in Rattus norvegicus (Rat).